The chain runs to 456 residues: MIQRHLGQPRLIQNGGDAGGVKAVAQKQTQRRLDQIFPAGRGSHANLHSIPTGYACIIAALTENSQRRHCFAARPSLCVAVMDDSKTNLIGLSRDQLIAEMASIGEKPFRAKQLWHWMYNRGETDFAKMTSISKSMHGALAERYVVRRPGVTKELISADTTRKWLLKFDDGHEAETVYIPDADEERGAVCISTQVGCTLTCRFCHTGTQLLVRNLSAAEIVGQFMVARDSYGEWPTPDDGGRQLSNIVVMGMGEPLYNFENVATALEIAMDGEGIGISKRRITLSTSGVVPMMKECGERLGVNLAVSLHAVTDEIRDRIMPINKKYPLKELMQACREYPGASNARRITFEYIMLKGINDSAADARALLKLVKGLPAKFNLIPFNPWPGSEFDTPDIKTTKAFSDILQDAGYSAPIRMPRGRDILAACGQLRSESQRERASLAKARAAAGIADEHHG.

A disordered region spans residues Met-1–Val-21. The active-site Proton acceptor is Glu-175. Residues Asp-183–Arg-416 form the Radical SAM core domain. A disulfide bond links Cys-190 and Cys-427. Residues Cys-197, Cys-201, and Cys-204 each coordinate [4Fe-4S] cluster. S-adenosyl-L-methionine contacts are provided by residues Gly-253–Glu-254, Ser-285, Ser-307–His-309, and Asn-384. Cys-427 acts as the S-methylcysteine intermediate in catalysis.

The protein belongs to the radical SAM superfamily. RlmN family. [4Fe-4S] cluster is required as a cofactor.

The protein resides in the cytoplasm. The catalysed reaction is adenosine(2503) in 23S rRNA + 2 reduced [2Fe-2S]-[ferredoxin] + 2 S-adenosyl-L-methionine = 2-methyladenosine(2503) in 23S rRNA + 5'-deoxyadenosine + L-methionine + 2 oxidized [2Fe-2S]-[ferredoxin] + S-adenosyl-L-homocysteine. The enzyme catalyses adenosine(37) in tRNA + 2 reduced [2Fe-2S]-[ferredoxin] + 2 S-adenosyl-L-methionine = 2-methyladenosine(37) in tRNA + 5'-deoxyadenosine + L-methionine + 2 oxidized [2Fe-2S]-[ferredoxin] + S-adenosyl-L-homocysteine. Its function is as follows. Specifically methylates position 2 of adenine 2503 in 23S rRNA and position 2 of adenine 37 in tRNAs. m2A2503 modification seems to play a crucial role in the proofreading step occurring at the peptidyl transferase center and thus would serve to optimize ribosomal fidelity. The polypeptide is Dual-specificity RNA methyltransferase RlmN (Paramagnetospirillum magneticum (strain ATCC 700264 / AMB-1) (Magnetospirillum magneticum)).